Consider the following 362-residue polypeptide: MYQSSSSTSSSSQRSSLPGGGGLIRYGSAPGSFLNSVVDEVIGGGSSNARDFTGYQPSSDNFIGNFFTGAADSSSLRSDSTTCGVNNSSDGQKQLGNNNNNNSNKDIFLDRSYGGFNEISQQHKSNDIGGGNSSGSYSLARQRSSPADFFTYLASDKNNFSLNQPTSDYSPQGGSNGGRGHSRLKSQLSFTNHDSLARINEVNETPVHDGSGHSFSAASFGAATTDSWDDGSGSIGFTVTRPSKRSKDMDSGLFSQYSLPSDTSMNYMDNFMQLPEDSVPCKIRAKRGCATHPRSIAERERRTRISGKLKKLQDLVPNMDKQTSYSDMLDLAVQHIKGLQHQLQNLKKDQENCTCGCSEKPS.

Over residues 1–16 the composition is skewed to low complexity; the sequence is MYQSSSSTSSSSQRSS. 4 disordered regions span residues 1 to 23, 78 to 106, 120 to 140, and 162 to 184; these read MYQSSSSTSSSSQRSSLPGGGGL, SDSTTCGVNNSSDGQKQLGNNNNNNSNKD, SQQHKSNDIGGGNSSGSYSLA, and LNQPTSDYSPQGGSNGGRGHSRL. Positions 78–96 are enriched in polar residues; that stretch reads SDSTTCGVNNSSDGQKQLG. Over residues 162–173 the composition is skewed to polar residues; that stretch reads LNQPTSDYSPQG. The residue at position 189 (serine 189) is a Phosphoserine. The region spanning 289–339 is the bHLH domain; sequence CATHPRSIAERERRTRISGKLKKLQDLVPNMDKQTSYSDMLDLAVQHIKGL.

Homodimer.

The protein resides in the nucleus. This is Transcription factor bHLH128 (BHLH128) from Arabidopsis thaliana (Mouse-ear cress).